The primary structure comprises 425 residues: Histidine--tRNA ligase (425 aa).

This sequence belongs to the class-II aminoacyl-tRNA synthetase family. As to quaternary structure, homodimer.

Its subcellular location is the cytoplasm. The enzyme catalyses tRNA(His) + L-histidine + ATP = L-histidyl-tRNA(His) + AMP + diphosphate + H(+). This chain is Histidine--tRNA ligase, found in Shewanella sp. (strain MR-7).